Consider the following 101-residue polypeptide: Small ribosomal subunit protein cS23 (101 aa).

This sequence belongs to the chloroplast-specific ribosomal protein cS23 family. In terms of assembly, part of the 30S ribosomal subunit.

It localises to the plastid. The protein resides in the chloroplast. In terms of biological role, probably a ribosomal protein or a ribosome-associated protein. In Cyanidium caldarium (Red alga), this protein is Small ribosomal subunit protein cS23 (ycf65).